The sequence spans 343 residues: Ferredoxin--NADP reductase (343 aa).

Residues D36, Q44, Y49, V89, F124, D289, and T330 each contribute to the FAD site.

This sequence belongs to the ferredoxin--NADP reductase type 2 family. Homodimer. It depends on FAD as a cofactor.

The catalysed reaction is 2 reduced [2Fe-2S]-[ferredoxin] + NADP(+) + H(+) = 2 oxidized [2Fe-2S]-[ferredoxin] + NADPH. This is Ferredoxin--NADP reductase from Mesorhizobium japonicum (strain LMG 29417 / CECT 9101 / MAFF 303099) (Mesorhizobium loti (strain MAFF 303099)).